A 150-amino-acid chain; its full sequence is Ribosome maturation factor RimP (150 aa).

This sequence belongs to the RimP family.

Its subcellular location is the cytoplasm. Its function is as follows. Required for maturation of 30S ribosomal subunits. This is Ribosome maturation factor RimP from Francisella philomiragia subsp. philomiragia (strain ATCC 25017 / CCUG 19701 / FSC 153 / O#319-036).